Consider the following 70-residue polypeptide: Alpha-elapitoxin-Ast2a (70 aa).

Cystine bridges form between C3-C20, C13-C41, C26-C30, C45-C56, and C57-C62. S70 carries the post-translational modification Serine amide.

This sequence belongs to the three-finger toxin family. Long-chain subfamily. Type II alpha-neurotoxin sub-subfamily. Expressed by the venom gland.

The protein resides in the secreted. Functionally, binds with high affinity to muscular (alpha-1/CHRNA1) and neuronal (alpha-7/CHRNA7) nicotinic acetylcholine receptor (nAChR) and inhibits acetylcholine from binding to the receptor, thereby impairing neuromuscular and neuronal transmission. The protein is Alpha-elapitoxin-Ast2a of Hydrophis stokesii (Stokes's sea snake).